A 142-amino-acid chain; its full sequence is MCHAAPARPEGARGRPPSGDNFSGAARSKPVGAAFEQRARQFLERHGLGFVAANVTMRGGELDLVMREPDGMLVFVEVRARRSTRHGGATASVGWRKRRRLVAAALQFWSRHGAGAACRFDVVAFEAGRLAWLRDAFRTDDA.

The segment covering 1 to 19 (MCHAAPARPEGARGRPPSG) has biased composition (low complexity). Residues 1-27 (MCHAAPARPEGARGRPPSGDNFSGAAR) are disordered.

The protein belongs to the UPF0102 family.

The protein is UPF0102 protein Bcen2424_0290 of Burkholderia cenocepacia (strain HI2424).